A 352-amino-acid polypeptide reads, in one-letter code: S-adenosylmethionine:tRNA ribosyltransferase-isomerase (352 aa).

The protein belongs to the QueA family. Monomer.

It localises to the cytoplasm. The enzyme catalyses 7-aminomethyl-7-carbaguanosine(34) in tRNA + S-adenosyl-L-methionine = epoxyqueuosine(34) in tRNA + adenine + L-methionine + 2 H(+). The protein operates within tRNA modification; tRNA-queuosine biosynthesis. In terms of biological role, transfers and isomerizes the ribose moiety from AdoMet to the 7-aminomethyl group of 7-deazaguanine (preQ1-tRNA) to give epoxyqueuosine (oQ-tRNA). This is S-adenosylmethionine:tRNA ribosyltransferase-isomerase from Bacteroides fragilis (strain ATCC 25285 / DSM 2151 / CCUG 4856 / JCM 11019 / LMG 10263 / NCTC 9343 / Onslow / VPI 2553 / EN-2).